A 327-amino-acid chain; its full sequence is GMP reductase (327 aa).

The active-site Thioimidate intermediate is Cys-175. 204 to 227 (IIADGGIRTHGDVAKSIRFGATMV) contributes to the NADP(+) binding site.

The protein belongs to the IMPDH/GMPR family. GuaC type 2 subfamily.

The catalysed reaction is IMP + NH4(+) + NADP(+) = GMP + NADPH + 2 H(+). In terms of biological role, catalyzes the irreversible NADPH-dependent deamination of GMP to IMP. It functions in the conversion of nucleobase, nucleoside and nucleotide derivatives of G to A nucleotides, and in maintaining the intracellular balance of A and G nucleotides. In Bacillus cereus (strain ATCC 10987 / NRS 248), this protein is GMP reductase.